A 281-amino-acid chain; its full sequence is UPF0294 protein VP2298 (281 aa).

It belongs to the UPF0294 family.

The protein localises to the cytoplasm. This Vibrio parahaemolyticus serotype O3:K6 (strain RIMD 2210633) protein is UPF0294 protein VP2298.